The sequence spans 296 residues: 4-diphosphocytidyl-2-C-methyl-D-erythritol kinase (296 aa).

Lys-11 is an active-site residue. ATP is bound at residue 96 to 106 (PVSSGLAGGSA). Asp-136 is a catalytic residue.

The protein belongs to the GHMP kinase family. IspE subfamily.

The enzyme catalyses 4-CDP-2-C-methyl-D-erythritol + ATP = 4-CDP-2-C-methyl-D-erythritol 2-phosphate + ADP + H(+). The protein operates within isoprenoid biosynthesis; isopentenyl diphosphate biosynthesis via DXP pathway; isopentenyl diphosphate from 1-deoxy-D-xylulose 5-phosphate: step 3/6. Catalyzes the phosphorylation of the position 2 hydroxy group of 4-diphosphocytidyl-2C-methyl-D-erythritol. This is 4-diphosphocytidyl-2-C-methyl-D-erythritol kinase from Anaplasma phagocytophilum (strain HZ).